Here is a 106-residue protein sequence, read N- to C-terminus: Nucleoid-associated protein MCCL_1934 (106 aa).

The interval 1–34 (MRGGGNMQQMMKQMQKMQKKMAEEQEKLKEERIE) is disordered. Residues 7–16 (MQQMMKQMQK) are compositionally biased toward low complexity. Positions 20–34 (KMAEEQEKLKEERIE) are enriched in basic and acidic residues.

Belongs to the YbaB/EbfC family. As to quaternary structure, homodimer.

The protein resides in the cytoplasm. It localises to the nucleoid. Functionally, binds to DNA and alters its conformation. May be involved in regulation of gene expression, nucleoid organization and DNA protection. The polypeptide is Nucleoid-associated protein MCCL_1934 (Macrococcus caseolyticus (strain JCSC5402) (Macrococcoides caseolyticum)).